A 164-amino-acid polypeptide reads, in one-letter code: Peptidyl-prolyl cis-trans isomerase A (164 aa).

Position 1 is an N-acetylmethionine (Met-1). Val-2 is modified (N-acetylvaline; in Peptidyl-prolyl cis-trans isomerase A, N-terminally processed). The PPIase cyclophilin-type domain maps to 7-163 (FFDIAVDGEP…KKITIADCGQ (157 aa)). Lys-28 carries the post-translational modification N6-acetyllysine; alternate. Residue Lys-28 forms a Glycyl lysine isopeptide (Lys-Gly) (interchain with G-Cter in SUMO2); alternate linkage. Lys-28 participates in a covalent cross-link: Glycyl lysine isopeptide (Lys-Gly) (interchain with G-Cter in ubiquitin); alternate. 2 positions are modified to N6-acetyllysine: Lys-44 and Lys-76. A disulfide bond links Cys-62 and Cys-161. Ser-77 is modified (phosphoserine). Residue Lys-82 is modified to N6-acetyllysine; alternate. Residue Lys-82 forms a Glycyl lysine isopeptide (Lys-Gly) (interchain with G-Cter in SUMO2); alternate linkage. A Phosphothreonine modification is found at Thr-93. Residue Asn-108 is glycosylated (N-linked (GlcNAc...) asparagine). Residues Lys-125, Lys-131, and Lys-133 each carry the N6-acetyllysine modification.

This sequence belongs to the cyclophilin-type PPIase family. PPIase A subfamily. Interacts with protein phosphatase PPP3CA/calcineurin A. Interacts with isoform 2 of BSG/CD147. Interacts with FOXO1; the interaction promotes FOXO1 dephosphorylation, nuclear accumulation and transcriptional activity. Interacts with integrin ITGA2B:ITGB3; the interaction is ROS and peptidyl-prolyl cis-trans isomerase (PPIase) activity-dependent and is increased in the presence of thrombin. Interacts with MAP3K5. Interacts with TARDBP; the interaction is dependent on the RNA-binding activity of TARDBP and the PPIase activity of PPIA/CYPA and the acetylation of PPIA/CYPA at Lys-125 favors the interaction. Interacts with HNRNPA1, HNRNPA2B1, HNRNPC, RBMX, HNRNPK and HNRNPM. Post-translationally, acetylation at Lys-125 markedly inhibits catalysis of cis to trans isomerization. PPIA acetylation also antagonizes the immunosuppressive effects of cyclosporine by inhibiting the sequential steps of cyclosporine binding and calcineurin inhibition. Acetylation at Lys-125 favors the interaction with TARDBP.

The protein resides in the cytoplasm. It is found in the secreted. The protein localises to the nucleus. It carries out the reaction [protein]-peptidylproline (omega=180) = [protein]-peptidylproline (omega=0). Its activity is regulated as follows. Binds cyclosporin A (CsA). CsA mediates some of its effects via an inhibitory action on PPIase. In terms of biological role, catalyzes the cis-trans isomerization of proline imidic peptide bonds in oligopeptides. Exerts a strong chemotactic effect on leukocytes partly through activation of one of its membrane receptors BSG/CD147, initiating a signaling cascade that culminates in MAPK/ERK activation. Activates endothelial cells (ECs) in a proinflammatory manner by stimulating activation of NF-kappa-B and ERK, JNK and p38 MAP-kinases and by inducing expression of adhesion molecules including SELE and VCAM1. Induces apoptosis in ECs by promoting the FOXO1-dependent expression of CCL2 and BCL2L11 which are involved in EC chemotaxis and apoptosis. In response to oxidative stress, initiates proapoptotic and antiapoptotic signaling in ECs via activation of NF-kappa-B and AKT1 and up-regulation of antiapoptotic protein BCL2. Negatively regulates MAP3K5/ASK1 kinase activity, autophosphorylation and oxidative stress-induced apoptosis mediated by MAP3K5/ASK1. Necessary for the assembly of TARDBP in heterogeneous nuclear ribonucleoprotein (hnRNP) complexes and regulates TARDBP binding to RNA UG repeats and TARDBP-dependent expression of HDAC6, ATG7 and VCP which are involved in clearance of protein aggregates. Plays an important role in platelet activation and aggregation. Regulates calcium mobilization and integrin ITGA2B:ITGB3 bidirectional signaling via increased ROS production as well as by facilitating the interaction between integrin and the cell cytoskeleton. Binds heparan sulfate glycosaminoglycans. The chain is Peptidyl-prolyl cis-trans isomerase A (PPIA) from Bos taurus (Bovine).